Consider the following 198-residue polypeptide: RNA-free ribonuclease P (198 aa).

This sequence belongs to the HARP family.

The enzyme catalyses Endonucleolytic cleavage of RNA, removing 5'-extranucleotides from tRNA precursor.. In terms of biological role, RNA-free RNase P that catalyzes the removal of the 5'-leader sequence from pre-tRNA to produce the mature 5'-terminus. The protein is RNA-free ribonuclease P of Nitrosococcus oceani (strain ATCC 19707 / BCRC 17464 / JCM 30415 / NCIMB 11848 / C-107).